The primary structure comprises 278 residues: Secoisolariciresinol dehydrogenase (278 aa).

Residues 23–28 (GGAGGI), aspartate 47, valine 73, and asparagine 99 each bind NAD(+). Substrate contacts are provided by serine 104 and serine 164. The active-site Proton donor/acceptor is the tyrosine 167. NAD(+) is bound by residues lysine 171 and valine 200.

It belongs to the short-chain dehydrogenases/reductases (SDR) family. Homotetramer. As to expression, mostly expressed in stems and rhizomes, and, to a lower extent, in leaves.

The enzyme catalyses (-)-secoisolariciresinol + 2 NAD(+) = (-)-matairesinol + 2 NADH + 2 H(+). Its pathway is aromatic compound metabolism; phenylpropanoid biosynthesis. In terms of biological role, oxidoreductase involved in lignan biosynthesis. Also involved in the biosynthesis of etoposide, a chemotherapeutic compound of the topoisomerase inhibitor family. Catalyzes the stereospecific conversion of (-)-secoisolariciresinol to (-)-matairesinol via a lactol intermediate. This Sinopodophyllum hexandrum (Himalayan may apple) protein is Secoisolariciresinol dehydrogenase.